The sequence spans 356 residues: tRNA N6-adenosine threonylcarbamoyltransferase (356 aa).

Fe cation is bound by residues histidine 111 and histidine 115. Substrate contacts are provided by residues 143-147, aspartate 178, glycine 191, aspartate 195, and asparagine 286; that span reads LASGG. A Fe cation-binding site is contributed by aspartate 314.

The protein belongs to the KAE1 / TsaD family. Fe(2+) is required as a cofactor.

The protein resides in the cytoplasm. The catalysed reaction is L-threonylcarbamoyladenylate + adenosine(37) in tRNA = N(6)-L-threonylcarbamoyladenosine(37) in tRNA + AMP + H(+). Functionally, required for the formation of a threonylcarbamoyl group on adenosine at position 37 (t(6)A37) in tRNAs that read codons beginning with adenine. Is involved in the transfer of the threonylcarbamoyl moiety of threonylcarbamoyl-AMP (TC-AMP) to the N6 group of A37, together with TsaE and TsaB. TsaD likely plays a direct catalytic role in this reaction. This Sorangium cellulosum (strain So ce56) (Polyangium cellulosum (strain So ce56)) protein is tRNA N6-adenosine threonylcarbamoyltransferase.